Reading from the N-terminus, the 457-residue chain is F-box/LRR-repeat protein At3g62440 (457 aa).

The 49-residue stretch at 1–49 folds into the F-box domain; the sequence is MDRISNLPDEIICHIGSFLSAREAAFTTVLSKRWHNLFTIVPDLHFDSS. LRR repeat units follow at residues 53–79, 147–174, 177–202, 229–254, 283–310, and 337–362; these read GESL…SLKW, LSLG…SLYH, FYEF…TVCG, WDAF…YYSD, WGKG…NLYT, and LSNF…NIDG.

The polypeptide is F-box/LRR-repeat protein At3g62440 (Arabidopsis thaliana (Mouse-ear cress)).